A 248-amino-acid polypeptide reads, in one-letter code: Ras-related protein RSR1 (248 aa).

10-17 (GAGGVGKS) is a binding site for GTP. An Effector region motif is present at residues 32-40 (YDPTIEDSY). Residues 57 to 61 (DTAGV) and 116 to 119 (NKCD) contribute to the GTP site. Residues 182–248 (LQKQQQQQQQ…SSGSKFCTII (67 aa)) form a disordered region. A compositionally biased stretch (low complexity) spans 184-214 (KQQQQQQQEQDAEGQQQQQKSGKSKSSATQK). Polar residues-rich tracts occupy residues 219-231 (DGQT…LKQS) and 238-248 (SSSGSKFCTII). At cysteine 245 the chain carries Cysteine methyl ester. A lipid anchor (S-geranylgeranyl cysteine) is attached at cysteine 245. A propeptide spans 246 to 248 (TII) (removed in mature form).

This sequence belongs to the small GTPase superfamily. Ras family.

Its subcellular location is the cell membrane. It catalyses the reaction GTP + H2O = GDP + phosphate + H(+). Its activity is regulated as follows. Alternates between an inactive form bound to GDP and an active form bound to GTP. Activated by a guanine nucleotide-exchange factor (GEF) and inactivated by a GTPase-activating protein (GAP). Its function is as follows. Ras-related protein which binds GDP/GTP and possesses intrinsic GTPase activity. Involved in both yeast and hypha development. In the yeast phase, it is required for normal (polar) bud site selection and is involved in cell morphogenesis; in the yeast-mycelial transition it is involved in germ tube emergence; and in the development of the hyphae it is involved in cell elongation. This is Ras-related protein RSR1 (RSR1) from Candida albicans (Yeast).